The sequence spans 435 residues: F-box/FBD/LRR-repeat protein At1g51370 (435 aa).

The F-box domain occupies 18–64; that stretch reads EDRISQLPEPLISEILFHLSTKDSVRTSALSTKWRYLWQSVPGLDLD. LRR repeat units lie at residues 123–148, 170–195, 234–259, 262–287, and 314–340; these read VHCF…RLRW, VSYP…ILFS, AKMY…DFVN, GRYQ…VISS, and RFYI…ILEM. One can recognise an FBD domain in the interval 354 to 406; sequence EPNVMVSTVPWCLVSSLKFVELKRSIPRYEGEMELVRYVLTNSTVLKKLRLNV.

The protein is F-box/FBD/LRR-repeat protein At1g51370 of Arabidopsis thaliana (Mouse-ear cress).